We begin with the raw amino-acid sequence, 158 residues long: D-aminoacyl-tRNA deacylase (158 aa).

Residues 143–144 (GP) carry the Gly-cisPro motif, important for rejection of L-amino acids motif.

It belongs to the DTD family. In terms of assembly, homodimer.

Its subcellular location is the cytoplasm. The catalysed reaction is glycyl-tRNA(Ala) + H2O = tRNA(Ala) + glycine + H(+). The enzyme catalyses a D-aminoacyl-tRNA + H2O = a tRNA + a D-alpha-amino acid + H(+). Its function is as follows. An aminoacyl-tRNA editing enzyme that deacylates mischarged D-aminoacyl-tRNAs. Also deacylates mischarged glycyl-tRNA(Ala), protecting cells against glycine mischarging by AlaRS. Acts via tRNA-based rather than protein-based catalysis; rejects L-amino acids rather than detecting D-amino acids in the active site. By recycling D-aminoacyl-tRNA to D-amino acids and free tRNA molecules, this enzyme counteracts the toxicity associated with the formation of D-aminoacyl-tRNA entities in vivo and helps enforce protein L-homochirality. The chain is D-aminoacyl-tRNA deacylase from Solidesulfovibrio magneticus (strain ATCC 700980 / DSM 13731 / RS-1) (Desulfovibrio magneticus).